A 292-amino-acid polypeptide reads, in one-letter code: MPWIQIRINATAKTADKVSNMLLGRGAQAVTFMDAKDVPVYEPMPGETPLWGETEVMGLFDAETDPAPTIAFFQQIFGEDVGYKVEQLEDKDWVREWMDHFHPMQFGERLWICPSWRDVPNPDAVNVMLDPGLAFGTGTHPTTALCLQWLDGLDLAGKTVVDFGCGSGILGIAALKLGAARVIGIDIDPQAIQASRDNAERNGVADQIELYLPADQPQDVEADVVVANILAGPLRELAPLIAGHGKAGSLMALSGVLESQAPELETIYGQWFEMDPTAVKEEWCRLSGRKLG.

S-adenosyl-L-methionine contacts are provided by Thr143, Gly164, Asp186, and Asn228.

The protein belongs to the methyltransferase superfamily. PrmA family.

Its subcellular location is the cytoplasm. The catalysed reaction is L-lysyl-[protein] + 3 S-adenosyl-L-methionine = N(6),N(6),N(6)-trimethyl-L-lysyl-[protein] + 3 S-adenosyl-L-homocysteine + 3 H(+). In terms of biological role, methylates ribosomal protein L11. This Aeromonas hydrophila subsp. hydrophila (strain ATCC 7966 / DSM 30187 / BCRC 13018 / CCUG 14551 / JCM 1027 / KCTC 2358 / NCIMB 9240 / NCTC 8049) protein is Ribosomal protein L11 methyltransferase.